The primary structure comprises 516 residues: UDP-N-acetylmuramyl-tripeptide synthetase (516 aa).

Residue serine 36 coordinates UDP-N-acetyl-alpha-D-muramoyl-L-alanyl-D-glutamate. 113–119 (GTKGKTT) contributes to the ATP binding site. UDP-N-acetyl-alpha-D-muramoyl-L-alanyl-D-glutamate is bound by residues 159 to 160 (TT), serine 186, and arginine 194. Lysine 228 is modified (N6-carboxylysine).

It belongs to the MurCDEF family. MurE subfamily. Carboxylation is probably crucial for Mg(2+) binding and, consequently, for the gamma-phosphate positioning of ATP.

The protein localises to the cytoplasm. It functions in the pathway cell wall biogenesis; peptidoglycan biosynthesis. Functionally, catalyzes the addition of an amino acid to the nucleotide precursor UDP-N-acetylmuramoyl-L-alanyl-D-glutamate (UMAG) in the biosynthesis of bacterial cell-wall peptidoglycan. The polypeptide is UDP-N-acetylmuramyl-tripeptide synthetase (Limosilactobacillus reuteri (strain DSM 20016) (Lactobacillus reuteri)).